Here is a 634-residue protein sequence, read N- to C-terminus: Frizzled and smoothened-like protein D (634 aa).

A signal peptide spans 1–21 (MINKFKFYLIFLKLILILVNC). The Extracellular segment spans residues 22–257 (QNSLNDYGFG…QMDSVINMSK (236 aa)). An FZ domain is found at 34–178 (DESSICTSYI…LTKYGYTANG (145 aa)). N-linked (GlcNAc...) asparagine glycosylation is found at Asn-126, Asn-168, Asn-215, Asn-243, and Asn-254. Residues 258-278 (AMSSISFVLSLFNVITFGLLI) form a helical membrane-spanning segment. The Cytoplasmic portion of the chain corresponds to 279 to 287 (KKKSKYNVC). A helical transmembrane segment spans residues 288 to 308 (IALMAIGSSFIYLSDIINYGV). The Extracellular portion of the chain corresponds to 309-335 (GIEKQLCPEPGRVATQRVDSLCGFTGS). Residues 336–356 (IFHIGITLCVLWSMTMGIVLY) form a helical membrane-spanning segment. The Cytoplasmic portion of the chain corresponds to 357 to 368 (SKIKQFKLPNFR). A helical transmembrane segment spans residues 369–389 (YFLIGNLSFTVVTLIILASAK). At 390–410 (KFQGGNGFLECWMRDRWYVVA) the chain is on the extracellular side. Residues 411–431 (IFWIPCGIALLLGVLSICGVI) form a helical membrane-spanning segment. The Cytoplasmic portion of the chain corresponds to 432-454 (FEIYKISKNVSLKDSKVVIRELK). Residues 455–475 (PFVLVVTVSASLIYLFVFYFD) traverse the membrane as a helical segment. Over 476-513 (SESKYDFYKKGVEDYILCLLTSENPLDECYTVGPNFNS) the chain is Extracellular. The helical transmembrane segment at 514-534 (YFMFYFLIRFFGILFFGIFGT) threads the bilayer. The Cytoplasmic portion of the chain corresponds to 535–634 (SEIARNAWTE…MEIELDSIDI (100 aa)). Residues 560–624 (VSSSTRGGGG…NNNNNDNNNK (65 aa)) form a disordered region. Low complexity-rich tracts occupy residues 572–592 (SGIKSSSSSSNSGVCNNNNST) and 609–622 (DNTIITNNNNNDNN).

This sequence belongs to the G-protein coupled receptor Fz/Smo family.

It is found in the membrane. The chain is Frizzled and smoothened-like protein D (fslD) from Dictyostelium discoideum (Social amoeba).